Reading from the N-terminus, the 105-residue chain is Synaptic plasticity regulator PANTS (105 aa).

This sequence belongs to the UPF0545 family. Interacts with RTN4 isoform A/Nogo-A; the interaction results in enhanced RTN4-mediated inhibition of AMPA receptor clustering. Also interacts with NCAM1, RANBP2 and CCT8. Post-translationally, rapidly degraded by proteolysis following neuronal stimulation, resulting in increased AMPA receptor clustering. In the postnatal brain, expressed diffusely throughout the hippocampus at a low level at 8 weeks (at protein level). At 16 weeks, strongly expressed in the stratum lucidum of the hippocampus (at protein level). In developing and aging brain, expression is strongest in hippocampus, especially in areas CA3 and CA2, throughout the dorsoventral axis.

Its subcellular location is the synapse. It is found in the synaptic cleft. Functionally, negatively regulates long-term potentiation and modulates adult synaptic plasticity. Stabilizes the interaction of RTN4 isoform A/Nogo-A with its receptors, inhibiting clustering of postsynaptic AMPA receptors at synaptic sites. Upon neuronal stimulation, degraded at synapses, reducing RTN4 signaling and allowing AMPA receptor clustering at individual synapses. This chain is Synaptic plasticity regulator PANTS, found in Mus musculus (Mouse).